The following is a 251-amino-acid chain: Ubiquinone/menaquinone biosynthesis C-methyltransferase UbiE (251 aa).

S-adenosyl-L-methionine contacts are provided by residues T74, D95, and 123–124 (NA).

This sequence belongs to the class I-like SAM-binding methyltransferase superfamily. MenG/UbiE family.

It catalyses the reaction a 2-demethylmenaquinol + S-adenosyl-L-methionine = a menaquinol + S-adenosyl-L-homocysteine + H(+). The catalysed reaction is a 2-methoxy-6-(all-trans-polyprenyl)benzene-1,4-diol + S-adenosyl-L-methionine = a 5-methoxy-2-methyl-3-(all-trans-polyprenyl)benzene-1,4-diol + S-adenosyl-L-homocysteine + H(+). Its pathway is quinol/quinone metabolism; menaquinone biosynthesis; menaquinol from 1,4-dihydroxy-2-naphthoate: step 2/2. It participates in cofactor biosynthesis; ubiquinone biosynthesis. Its function is as follows. Methyltransferase required for the conversion of demethylmenaquinol (DMKH2) to menaquinol (MKH2) and the conversion of 2-polyprenyl-6-methoxy-1,4-benzoquinol (DDMQH2) to 2-polyprenyl-3-methyl-6-methoxy-1,4-benzoquinol (DMQH2). This chain is Ubiquinone/menaquinone biosynthesis C-methyltransferase UbiE, found in Shewanella baltica (strain OS155 / ATCC BAA-1091).